Consider the following 632-residue polypeptide: Gamma-aminobutyric acid receptor subunit theta (632 aa).

The first 21 residues, Met-1 to Ala-21, serve as a signal peptide directing secretion. At Glu-22 to Tyr-268 the chain is on the extracellular side. N-linked (GlcNAc...) asparagine glycosylation is present at Asn-127. A disulfide bridge connects residues Cys-183 and Cys-197. Residues Leu-269–Met-289 form a helical membrane-spanning segment. The Cytoplasmic segment spans residues Asn-290–Arg-297. The helical transmembrane segment at Val-298 to Leu-315 threads the bilayer. The Extracellular portion of the chain corresponds to Arg-316–Lys-326. The helical transmembrane segment at Ala-327–Val-347 threads the bilayer. The Cytoplasmic portion of the chain corresponds to Tyr-348 to Ser-611. Disordered stretches follow at residues Ser-410–Glu-458 and His-491–Gly-523. A compositionally biased stretch (polar residues) spans Ser-413–Gln-425. Over residues Leu-426–Ser-439 the composition is skewed to low complexity. Positions Glu-448–Glu-458 are enriched in polar residues. Residues His-491 to Gly-511 show a composition bias toward basic and acidic residues. Residues Arg-612–Tyr-632 traverse the membrane as a helical segment.

It belongs to the ligand-gated ion channel (TC 1.A.9) family. Gamma-aminobutyric acid receptor (TC 1.A.9.5) subfamily. GABRQ sub-subfamily. As to quaternary structure, heteropentamer, formed by a combination of alpha (GABRA1-6), beta (GABRB1-3), gamma (GABRG1-3), delta (GABRD), epsilon (GABRE), rho (GABRR1-3), pi (GABRP) and theta (GABRQ) chains, each subunit exhibiting distinct physiological and pharmacological properties. In terms of tissue distribution, expressed in brain.

The protein resides in the postsynaptic cell membrane. It is found in the cell membrane. The enzyme catalyses chloride(in) = chloride(out). Its activity is regulated as follows. Potentiated by etomidate, propofol, pregnanolone and pentobarbital. Its function is as follows. Theta subunit of the heteropentameric ligand-gated chloride channel gated by gamma-aminobutyric acid (GABA), a major inhibitory neurotransmitter in the brain. GABA-gated chloride channels, also named GABA(A) receptors (GABAAR), consist of five subunits arranged around a central pore and contain GABA active binding site(s) located at the alpha and beta subunit interfaces. When activated by GABA, GABAARs selectively allow the flow of chloride anions across the cell membrane down their electrochemical gradient. The polypeptide is Gamma-aminobutyric acid receptor subunit theta (Homo sapiens (Human)).